Reading from the N-terminus, the 333-residue chain is Methionine import ATP-binding protein MetN 1 (333 aa).

Positions I2 to V241 constitute an ABC transporter domain. An ATP-binding site is contributed by G38–S45.

Belongs to the ABC transporter superfamily. Methionine importer (TC 3.A.1.24) family. As to quaternary structure, the complex is composed of two ATP-binding proteins (MetN), two transmembrane proteins (MetI) and a solute-binding protein (MetQ).

It localises to the cell membrane. It catalyses the reaction L-methionine(out) + ATP + H2O = L-methionine(in) + ADP + phosphate + H(+). The enzyme catalyses D-methionine(out) + ATP + H2O = D-methionine(in) + ADP + phosphate + H(+). Functionally, part of the ABC transporter complex MetNIQ involved in methionine import. Responsible for energy coupling to the transport system. The sequence is that of Methionine import ATP-binding protein MetN 1 from Bacillus licheniformis (strain ATCC 14580 / DSM 13 / JCM 2505 / CCUG 7422 / NBRC 12200 / NCIMB 9375 / NCTC 10341 / NRRL NRS-1264 / Gibson 46).